Reading from the N-terminus, the 235-residue chain is Phosphoribosylaminoimidazole-succinocarboxamide synthase (235 aa).

This sequence belongs to the SAICAR synthetase family.

The catalysed reaction is 5-amino-1-(5-phospho-D-ribosyl)imidazole-4-carboxylate + L-aspartate + ATP = (2S)-2-[5-amino-1-(5-phospho-beta-D-ribosyl)imidazole-4-carboxamido]succinate + ADP + phosphate + 2 H(+). Its pathway is purine metabolism; IMP biosynthesis via de novo pathway; 5-amino-1-(5-phospho-D-ribosyl)imidazole-4-carboxamide from 5-amino-1-(5-phospho-D-ribosyl)imidazole-4-carboxylate: step 1/2. The sequence is that of Phosphoribosylaminoimidazole-succinocarboxamide synthase from Lachnoclostridium phytofermentans (strain ATCC 700394 / DSM 18823 / ISDg) (Clostridium phytofermentans).